Consider the following 91-residue polypeptide: B3 domain-containing protein Os03g0164300 (91 aa).

Positions 1 to 91 (MTNAKMTFAV…VLVLKVHVLK (91 aa)) form a DNA-binding region, TF-B3.

It is found in the nucleus. The protein is B3 domain-containing protein Os03g0164300 of Oryza sativa subsp. japonica (Rice).